A 440-amino-acid chain; its full sequence is Xylose isomerase (440 aa).

Catalysis depends on residues H100 and D103. E231, E267, H270, D295, D306, D308, and D338 together coordinate Mg(2+).

Belongs to the xylose isomerase family. As to quaternary structure, homotetramer. Requires Mg(2+) as cofactor.

It is found in the cytoplasm. It carries out the reaction alpha-D-xylose = alpha-D-xylulofuranose. This is Xylose isomerase from Burkholderia thailandensis (strain ATCC 700388 / DSM 13276 / CCUG 48851 / CIP 106301 / E264).